A 405-amino-acid polypeptide reads, in one-letter code: Transcriptional regulatory protein DEP1 (405 aa).

The span at 1–12 shows a compositional bias: low complexity; that stretch reads MSQQTPQESEQT. Disordered regions lie at residues 1-26 and 49-171; these read MSQQ…SVLS and AGTE…VMPS. A Phosphoserine modification is found at Ser56. 2 stretches are compositionally biased toward basic and acidic residues: residues 86–108 and 116–139; these read SLKR…KVPG and EEEK…ARDE. The residue at position 120 (Ser120) is a Phosphoserine. The segment covering 140–157 has biased composition (acidic residues); sequence QGDEGDNEEENNEEDNEN. At Ser370 the chain carries Phosphoserine.

In terms of assembly, component of the RPD3C(L) complex composed of at least ASH1, CTI6, DEP1, PHO23, RPD3, RXT2, RXT3, SAP30, SDS3, SIN3, UME1 and UME6.

It localises to the cytoplasm. Its subcellular location is the nucleus. Component of the RPD3C(L) histone deacetylase complex (HDAC) responsible for the deacetylation of lysine residues on the N-terminal part of the core histones (H2A, H2B, H3 and H4). Histone deacetylation gives a tag for epigenetic repression and plays an important role in transcriptional regulation, cell cycle progression and developmental events. This is Transcriptional regulatory protein DEP1 (DEP1) from Saccharomyces cerevisiae (strain ATCC 204508 / S288c) (Baker's yeast).